The following is a 339-amino-acid chain: Ketol-acid reductoisomerase (NADP(+)) (339 aa).

Positions methionine 1–threonine 182 constitute a KARI N-terminal Rossmann domain. NADP(+)-binding positions include tyrosine 24–glutamine 27, lysine 48, serine 51, threonine 53, and aspartate 83–glutamine 86. Histidine 108 is an active-site residue. Glycine 134 lines the NADP(+) pocket. Residues asparagine 183–isoleucine 328 enclose the KARI C-terminal knotted domain. The Mg(2+) site is built by aspartate 191, glutamate 195, glutamate 227, and glutamate 231. Serine 252 serves as a coordination point for substrate.

The protein belongs to the ketol-acid reductoisomerase family. Mg(2+) serves as cofactor.

The enzyme catalyses (2R)-2,3-dihydroxy-3-methylbutanoate + NADP(+) = (2S)-2-acetolactate + NADPH + H(+). It carries out the reaction (2R,3R)-2,3-dihydroxy-3-methylpentanoate + NADP(+) = (S)-2-ethyl-2-hydroxy-3-oxobutanoate + NADPH + H(+). It functions in the pathway amino-acid biosynthesis; L-isoleucine biosynthesis; L-isoleucine from 2-oxobutanoate: step 2/4. Its pathway is amino-acid biosynthesis; L-valine biosynthesis; L-valine from pyruvate: step 2/4. Involved in the biosynthesis of branched-chain amino acids (BCAA). Catalyzes an alkyl-migration followed by a ketol-acid reduction of (S)-2-acetolactate (S2AL) to yield (R)-2,3-dihydroxy-isovalerate. In the isomerase reaction, S2AL is rearranged via a Mg-dependent methyl migration to produce 3-hydroxy-3-methyl-2-ketobutyrate (HMKB). In the reductase reaction, this 2-ketoacid undergoes a metal-dependent reduction by NADPH to yield (R)-2,3-dihydroxy-isovalerate. This Sinorhizobium medicae (strain WSM419) (Ensifer medicae) protein is Ketol-acid reductoisomerase (NADP(+)).